Reading from the N-terminus, the 554-residue chain is CTP synthase (554 aa).

The tract at residues 1-279 (MTSSRKVRPT…DTFIIRRLGL (279 aa)) is amidoligase domain. CTP is bound at residue Ser21. A UTP-binding site is contributed by Ser21. Residues 22–27 (SLGKGL) and Asp79 contribute to the ATP site. Mg(2+) contacts are provided by Asp79 and Glu153. Residues 160-162 (DIE), 200-205 (KTKPTQ), and Lys236 contribute to the CTP site. Residues 200-205 (KTKPTQ) and Lys236 contribute to the UTP site. The Glutamine amidotransferase type-1 domain occupies 304 to 553 (TVGIVGKYID…VKTALELRVH (250 aa)). Gly367 contacts L-glutamine. Cys394 serves as the catalytic Nucleophile; for glutamine hydrolysis. Residues 395 to 398 (LGLQ), Glu417, and Arg478 each bind L-glutamine. Residues His526 and Glu528 contribute to the active site.

The protein belongs to the CTP synthase family. Homotetramer.

The catalysed reaction is UTP + L-glutamine + ATP + H2O = CTP + L-glutamate + ADP + phosphate + 2 H(+). It carries out the reaction L-glutamine + H2O = L-glutamate + NH4(+). The enzyme catalyses UTP + NH4(+) + ATP = CTP + ADP + phosphate + 2 H(+). Its pathway is pyrimidine metabolism; CTP biosynthesis via de novo pathway; CTP from UDP: step 2/2. Its activity is regulated as follows. Allosterically activated by GTP, when glutamine is the substrate; GTP has no effect on the reaction when ammonia is the substrate. The allosteric effector GTP functions by stabilizing the protein conformation that binds the tetrahedral intermediate(s) formed during glutamine hydrolysis. Inhibited by the product CTP, via allosteric rather than competitive inhibition. In terms of biological role, catalyzes the ATP-dependent amination of UTP to CTP with either L-glutamine or ammonia as the source of nitrogen. Regulates intracellular CTP levels through interactions with the four ribonucleotide triphosphates. This chain is CTP synthase, found in Corynebacterium glutamicum (strain R).